The chain runs to 151 residues: Deoxyuridine 5'-triphosphate nucleotidohydrolase (151 aa).

Residues 70–72, N83, 87–89, and M97 each bind substrate; these read RSG and LID.

It belongs to the dUTPase family. Requires Mg(2+) as cofactor.

It carries out the reaction dUTP + H2O = dUMP + diphosphate + H(+). The protein operates within pyrimidine metabolism; dUMP biosynthesis; dUMP from dCTP (dUTP route): step 2/2. Functionally, this enzyme is involved in nucleotide metabolism: it produces dUMP, the immediate precursor of thymidine nucleotides and it decreases the intracellular concentration of dUTP so that uracil cannot be incorporated into DNA. This Actinobacillus pleuropneumoniae serotype 5b (strain L20) protein is Deoxyuridine 5'-triphosphate nucleotidohydrolase.